The following is a 505-amino-acid chain: Trans-cinnamate 4-monooxygenase (505 aa).

The helical transmembrane segment at 3–23 (LLLIEKTLVALFAAIIGAILI) threads the bilayer. (E)-cinnamate contacts are provided by residues 213–218 (RSRLAQ) and A306. Heme is bound at residue C447.

It belongs to the cytochrome P450 family. The cofactor is heme.

The protein resides in the membrane. It carries out the reaction (E)-cinnamate + reduced [NADPH--hemoprotein reductase] + O2 = (E)-4-coumarate + oxidized [NADPH--hemoprotein reductase] + H2O + H(+). The protein operates within phenylpropanoid metabolism; trans-4-coumarate biosynthesis; trans-4-coumarate from trans-cinnamate: step 1/1. Its activity is regulated as follows. Inactivated by piperonylic acid. Its function is as follows. Catalyzes the first oxidative step of the phenylpropanoid pathway in higher plants by transforming trans-cinnamate into p-coumarate. The compounds formed by this pathway are essential components for lignification, pollination, and defense against ultraviolet light, predators and pathogens. Can also use 2-naphthoic acid as substrate. This is Trans-cinnamate 4-monooxygenase from Helianthus tuberosus (Jerusalem artichoke).